The sequence spans 1009 residues: Glutamate receptor ionotropic, delta-2 (1009 aa).

The signal sequence occupies residues 1–23 (MKVFPAVLFLITFWSLEWEPVLP). Residues 24-566 (DSIIHIGAIF…DMFACLAPFD (543 aa)) lie on the Extracellular side of the membrane. 4 N-linked (GlcNAc...) asparagine glycosylation sites follow: asparagine 293, asparagine 306, asparagine 390, and asparagine 426. Ca(2+) contacts are provided by glutamate 531, valine 534, and aspartate 535. Residues 567–587 (LSLWACIAGTVLLVGTLVYLL) form a helical membrane-spanning segment. The Cytoplasmic segment spans residues 588–635 (NWLNPPRLPMGSVSSTTLYNSMWFVYGSFVQQGGEVPYTTLATRMMMG). The chain crosses the membrane as a helical span at residues 636-656 (VWWLFALIVISSYTANLAAFL). Residues 657–830 (TISRIENSIQ…KSGSALDIHS (174 aa)) are Extracellular-facing. Asparagine 713 is a glycosylation site (N-linked (GlcNAc...) asparagine). 3 residues coordinate Ca(2+): aspartate 753, aspartate 755, and serine 757. A helical transmembrane segment spans residues 831–851 (FAGVFFVLAAGVVLSCLIATV). Topologically, residues 852-1009 (ETWWTRRKGS…GNDPDRGTSI (158 aa)) are cytoplasmic. Positions 989 to 1009 (YQPTPAPNFSYGNDPDRGTSI) are disordered.

Belongs to the glutamate-gated ion channel (TC 1.A.10.1) family. GRID2 subfamily. As to quaternary structure, tetramer; dimer of dimers. In terms of tissue distribution, expressed in cerebellar Purkinje cells, in crest cells in the medial octavolateral nucleus and in type I neurons of the optic tectum.

The protein resides in the postsynaptic cell membrane. It catalyses the reaction Ca(2+)(in) = Ca(2+)(out). The enzyme catalyses Na(+)(in) = Na(+)(out). In terms of biological role, member of the ionotropic glutamate receptor family, which plays a crucial role in synaptic organization and signal transduction in the central nervous system. Although it shares structural features with ionotropic glutamate receptors, does not bind glutamate as a primary ligand. Promotes synaptogenesis and mediates the D-Serine-dependent long term depression signals and AMPA receptor endocytosis of cerebellar parallel fiber-Purkinje cell (PF-PC) synapses through the NRX1B-CBLN1-GRID2 triad complex. In the presence of neurexins and cerebellins, forms cation-selective channels that are proposed to be gated by glycine and D-serine. However, recent research disputes this ligand-gated cation channel activity. Cation-selective ion channel activity can be triggered by GRM1 in Purkinje cells. The chain is Glutamate receptor ionotropic, delta-2 from Danio rerio (Zebrafish).